We begin with the raw amino-acid sequence, 288 residues long: Glycine--tRNA ligase alpha subunit (288 aa).

Belongs to the class-II aminoacyl-tRNA synthetase family. Tetramer of two alpha and two beta subunits.

It localises to the cytoplasm. The enzyme catalyses tRNA(Gly) + glycine + ATP = glycyl-tRNA(Gly) + AMP + diphosphate. This Desulfatibacillum aliphaticivorans protein is Glycine--tRNA ligase alpha subunit.